A 100-amino-acid polypeptide reads, in one-letter code: Large ribosomal subunit protein eL21 (100 aa).

Residues 1–21 (MVKRTHGYRYKSRKLLRKKPR) form a disordered region.

Belongs to the eukaryotic ribosomal protein eL21 family.

In Pyrobaculum islandicum (strain DSM 4184 / JCM 9189 / GEO3), this protein is Large ribosomal subunit protein eL21.